The chain runs to 709 residues: Acyl-coenzyme A oxidase 4 (709 aa).

Over residues 1–12 (MTFTKKNVSVSQ) the composition is skewed to polar residues. The segment at 1–29 (MTFTKKNVSVSQGPDPRSSIQKERDSSKW) is disordered.

It belongs to the acyl-CoA oxidase family. In terms of assembly, homooctamer. FAD serves as cofactor.

It is found in the peroxisome. It catalyses the reaction a 2,3-saturated acyl-CoA + O2 = a (2E)-enoyl-CoA + H2O2. It participates in lipid metabolism; peroxisomal fatty acid beta-oxidation. The sequence is that of Acyl-coenzyme A oxidase 4 (POX4) from Candida tropicalis (Yeast).